We begin with the raw amino-acid sequence, 338 residues long: Methionine import ATP-binding protein MetN 2 (338 aa).

The 241-residue stretch at isoleucine 2–valine 242 folds into the ABC transporter domain. Glycine 39–serine 46 is an ATP binding site.

It belongs to the ABC transporter superfamily. Methionine importer (TC 3.A.1.24) family. As to quaternary structure, the complex is composed of two ATP-binding proteins (MetN), two transmembrane proteins (MetI) and a solute-binding protein (MetQ).

It localises to the cell inner membrane. The catalysed reaction is L-methionine(out) + ATP + H2O = L-methionine(in) + ADP + phosphate + H(+). The enzyme catalyses D-methionine(out) + ATP + H2O = D-methionine(in) + ADP + phosphate + H(+). In terms of biological role, part of the ABC transporter complex MetNIQ involved in methionine import. Responsible for energy coupling to the transport system. The protein is Methionine import ATP-binding protein MetN 2 of Salmonella typhi.